A 442-amino-acid polypeptide reads, in one-letter code: tRNA(Ile)-lysidine synthase (442 aa).

28–33 is an ATP binding site; that stretch reads SGGLDS.

The protein belongs to the tRNA(Ile)-lysidine synthase family.

The protein resides in the cytoplasm. The enzyme catalyses cytidine(34) in tRNA(Ile2) + L-lysine + ATP = lysidine(34) in tRNA(Ile2) + AMP + diphosphate + H(+). Functionally, ligates lysine onto the cytidine present at position 34 of the AUA codon-specific tRNA(Ile) that contains the anticodon CAU, in an ATP-dependent manner. Cytidine is converted to lysidine, thus changing the amino acid specificity of the tRNA from methionine to isoleucine. This is tRNA(Ile)-lysidine synthase from Pseudomonas aeruginosa (strain ATCC 15692 / DSM 22644 / CIP 104116 / JCM 14847 / LMG 12228 / 1C / PRS 101 / PAO1).